The primary structure comprises 482 residues: Membrane-bound lytic murein transglycosylase F (482 aa).

An N-terminal signal peptide occupies residues 1–13; the sequence is MKGLFLRIITALA. The interval 14 to 267 is non-LT domain; the sequence is LLFWAIDMVF…NLKEKYLGHI (254 aa). The tract at residues 268–482 is LT domain; the sequence is SQFDYVDTRS…NLEEIKENKD (215 aa). Residue glutamate 312 is part of the active site.

This sequence in the N-terminal section; belongs to the bacterial solute-binding protein 3 family. In the C-terminal section; belongs to the transglycosylase Slt family.

The protein resides in the cell outer membrane. The enzyme catalyses Exolytic cleavage of the (1-&gt;4)-beta-glycosidic linkage between N-acetylmuramic acid (MurNAc) and N-acetylglucosamine (GlcNAc) residues in peptidoglycan, from either the reducing or the non-reducing ends of the peptidoglycan chains, with concomitant formation of a 1,6-anhydrobond in the MurNAc residue.. Murein-degrading enzyme that degrades murein glycan strands and insoluble, high-molecular weight murein sacculi, with the concomitant formation of a 1,6-anhydromuramoyl product. Lytic transglycosylases (LTs) play an integral role in the metabolism of the peptidoglycan (PG) sacculus. Their lytic action creates space within the PG sacculus to allow for its expansion as well as for the insertion of various structures such as secretion systems and flagella. The sequence is that of Membrane-bound lytic murein transglycosylase F from Haemophilus influenzae (strain PittEE).